Here is a 242-residue protein sequence, read N- to C-terminus: UPF0246 protein SPP_1571 (242 aa).

It belongs to the UPF0246 family.

The protein is UPF0246 protein SPP_1571 of Streptococcus pneumoniae (strain P1031).